Here is a 447-residue protein sequence, read N- to C-terminus: uncharacterized protein (447 aa).

3 disordered regions span residues 1–80 (MTFE…EQSS), 115–184 (ATTQ…PNNP), and 295–322 (LQDN…SSGI). Positions 11-32 (QRRDESAYRLGEEDGRQKGESS) are enriched in basic and acidic residues. Residues 42–51 (KNPSNVSFWS) show a composition bias toward polar residues. Residues 61-72 (VKTDRPQFHRAD) show a composition bias toward basic and acidic residues. Polar residues predominate over residues 115-158 (ATTQSSPISTSFNPQLPSNSNTNRFDFGSESQLSSNYTNDTGLS). Over residues 300 to 321 (SLTSQGSNLSSQNSGLSSSSSG) the composition is skewed to low complexity. 2 helical membrane-spanning segments follow: residues 385 to 405 (FMFL…ASFL) and 424 to 444 (IINR…IGLG).

The protein localises to the membrane. This is an uncharacterized protein from Schizosaccharomyces pombe (strain 972 / ATCC 24843) (Fission yeast).